Reading from the N-terminus, the 407-residue chain is MNSHFLTNDLILEVLSRLPLKSVARFHCVSKRWASMFGSPYFKELFLTRSSAKPRLLFAIVQNGVWRFFSSPRLEKSSSTLVATAEFHMKLSPNNLRIYHDNTPRYFSIGYASGLIYLYGDRYEATPLICNPNTGRYTILPKCYTYRKAFSFFGFDPIDKQYKALSMIYPSGPGHSKILTFGDGDMNWKKIKYRVLHDIYSQGICINGVLYYLGDTSDWDNDHDVTSGNVLVCFDLRSESFTFIGLECGQLINYKGKLAVIFWDDVDDDDVKDDAIDEMHVWVLEDVEKKEWSKYAYTWTEDKLYRSQVSVVGMTASGEIVFSMRKYTSEQPFYVYYFNPERNNLRRVEIQGFEAFTKFGTVYTFVDHVEDLNVYNLKHFKSVHPPSVQPEYDESDSESEEDREIII.

An F-box domain is found at Met-1–Leu-45. The interval Pro-385–Ile-407 is disordered. Acidic residues predominate over residues Glu-391–Ile-407.

This Arabidopsis thaliana (Mouse-ear cress) protein is Putative F-box protein At2g16220.